A 686-amino-acid chain; its full sequence is Potassium-transporting ATPase ATP-binding subunit 2 (686 aa).

4 consecutive transmembrane segments (helical) span residues 37–57, 64–84, 223–243, and 255–275; these read MFVV…PNLF, MILY…FANF, LLVS…PMAI, and VALT…AIGI. The 4-aspartylphosphate intermediate role is filled by aspartate 306. ATP is bound by residues aspartate 343, glutamate 347, 376 to 383, and lysine 395; that span reads FTAQTRMS. Mg(2+)-binding residues include aspartate 518 and aspartate 522. The next 3 helical transmembrane spans lie at 588-608, 616-636, and 656-676; these read FAII…LNIM, AILS…PLAM, and VYGV…DLVI.

The protein belongs to the cation transport ATPase (P-type) (TC 3.A.3) family. Type IA subfamily. The system is composed of three essential subunits: KdpA, KdpB and KdpC.

It localises to the cell membrane. It catalyses the reaction K(+)(out) + ATP + H2O = K(+)(in) + ADP + phosphate + H(+). Part of the high-affinity ATP-driven potassium transport (or Kdp) system, which catalyzes the hydrolysis of ATP coupled with the electrogenic transport of potassium into the cytoplasm. This subunit is responsible for energy coupling to the transport system and for the release of the potassium ions to the cytoplasm. The polypeptide is Potassium-transporting ATPase ATP-binding subunit 2 (Listeria innocua serovar 6a (strain ATCC BAA-680 / CLIP 11262)).